Reading from the N-terminus, the 409-residue chain is Coagulation factor IX (409 aa).

Ca(2+)-binding residues include Tyr-1, Asn-2, Glu-7, Glu-8, Glu-16, Glu-18, Glu-21, Glu-22, Glu-27, Glu-28, and Glu-31. The Gla domain occupies 1–47 (YNSGKLEESFVRGNLERECIEEKCSFEEAREVFENTEKTNEFWKQYV). A 4-carboxyglutamate mark is found at Glu-7, Glu-8, Glu-16, Glu-18, Glu-21, Glu-22, Glu-27, Glu-28, Glu-31, Glu-34, Glu-37, and Glu-41. Glu-16 contacts Mg(2+). The cysteines at positions 19 and 24 are disulfide-linked. Glu-21 contributes to the Mg(2+) binding site. Glu-27 provides a ligand contact to Mg(2+). Glu-31 contacts Mg(2+). Residues Glu-37, Glu-41, Asp-48, Gly-49, and Gln-51 each contribute to the Ca(2+) site. Positions 37 and 41 each coordinate Mg(2+). The EGF-like 1; calcium-binding domain maps to 48 to 84 (DGDQCEPNPCLNGGLCKDDINSYECWCQVGFEGKNCE). 10 disulfide bridges follow: Cys-52/Cys-63, Cys-57/Cys-72, Cys-74/Cys-83, Cys-89/Cys-100, Cys-96/Cys-110, Cys-112/Cys-125, Cys-133/Cys-291, Cys-208/Cys-224, Cys-338/Cys-352, and Cys-363/Cys-391. The Ca(2+) site is built by Asp-65 and Asp-66. Asp-65 is subject to (3R)-3-hydroxyaspartate. Position 69 is a phosphoserine (Ser-69). Positions 85–126 (LDATCNIKNGRCKQFCKTGADSKVLCSCTTGYRLAPDQKSCK) constitute an EGF-like 2 domain. Residues 148-182 (AEIIFSNMDYENSTEVEPILDSLTESNQSSDDFIR) constitute a propeptide, activation peptide. The residue at position 157 (Tyr-157) is a Sulfotyrosine. Phosphoserine is present on Ser-160. A Phosphothreonine; alternate modification is found at Thr-161. The O-linked (GalNAc...) threonine; alternate glycan is linked to Thr-161. O-linked (GalNAc...) threonine glycosylation is present at Thr-171. Asn-174 carries an N-linked (GlcNAc...) asparagine glycan. One can recognise a Peptidase S1 domain in the interval 183–409 (IVGGENAKPG…YTKVSRYVNW (227 aa)). The active-site Charge relay system is the His-223. Positions 237, 239, 242, 244, and 247 each coordinate Ca(2+). The N-linked (GlcNAc...) asparagine glycan is linked to Asn-262. Asp-271 serves as the catalytic Charge relay system. Ser-367 serves as the catalytic Charge relay system.

Belongs to the peptidase S1 family. As to quaternary structure, heterodimer of a light chain and a heavy chain; disulfide-linked. Interacts (inactive and activated) with F11 (activated) in calcium-dependent manner. Interacts with SERPINC1. In terms of processing, activated by factor XIa, which excises the activation peptide. The propeptide can also be removed by snake venom protease. Activated by coagulation factor VIIa-tissue factor (F7-F3) complex in calcium-dependent manner. The iron and 2-oxoglutarate dependent 3-hydroxylation of aspartate and asparagine is (R) stereospecific within EGF domains.

Its subcellular location is the secreted. The catalysed reaction is Selective cleavage of Arg-|-Ile bond in factor X to form factor Xa.. In terms of biological role, factor IX is a vitamin K-dependent plasma protein that participates in the intrinsic pathway of blood coagulation by converting factor X to its active form in the presence of Ca(2+) ions, phospholipids, and factor VIIIa. The polypeptide is Coagulation factor IX (F9) (Sus scrofa (Pig)).